The sequence spans 363 residues: MDAARRGDTQPVMWTTGWLLLLPLLLCEGAQALECYSCVQKADDGCSPHRMKTVKCGPGVDVCTEAVGAVETIHGQFSVAVRGCGSGIPGKNDRGLDLHGLLAFFQLQQCSEDRCNAKLNLTLRGLNPAGNESAYEPNGAECYSCVGLSREKCQGSMPPVVNCYNASGRVYKGCFDGNVTLTAANVTVSLPVRGCVQDETCTRDGVTGPGFTLSGSCCQGPRCNADLRNKTYFSPRIPPLVLLPPPTTAAPSTRAQNSSSTTSTAAPTTTTSIIKPTTAQASHTSPHEMDLEVIQEEGASLSGGAAGHGGTAGHGGAAGHQDRSNMEKYPGKGGAQIPAKGGSGTLGSWLSAVLLTVVAGAML.

The N-terminal stretch at 1-32 (MDAARRGDTQPVMWTTGWLLLLPLLLCEGAQA) is a signal peptide. Residues 35–128 (CYSCVQKADD…LNLTLRGLNP (94 aa)) enclose the UPAR/Ly6 1 domain. N-linked (GlcNAc...) asparagine glycans are attached at residues asparagine 120, asparagine 131, asparagine 178, and asparagine 185. Positions 142–224 (CYSCVGLSRE…GSCCQGPRCN (83 aa)) constitute a UPAR/Ly6 2 domain. Pro residues predominate over residues 238–248 (PPLVLLPPPTT). 2 disordered regions span residues 238–287 (PPLV…TSPH) and 301–336 (LSGGAAGHGGTAGHGGAAGHQDRSNMEKYPGKGGAQ). The span at 249-278 (AAPSTRAQNSSSTTSTAAPTTTTSIIKPTT) shows a compositional bias: low complexity. Positions 304–318 (GAAGHGGTAGHGGAA) are enriched in gly residues. Over residues 320 to 330 (HQDRSNMEKYP) the composition is skewed to basic and acidic residues. Serine 343 carries GPI-anchor amidated serine lipidation. Residues 344–363 (GTLGSWLSAVLLTVVAGAML) constitute a propeptide, removed in mature form.

As to quaternary structure, binds laminin-1 and laminin-5. Interacts with LGALS3. Interacts with AGR2 and AGR3.

Its subcellular location is the cell membrane. Supports cell migration. May be involved in tumor progression. The protein is Ly6/PLAUR domain-containing protein 3 (Lypd3) of Mus musculus (Mouse).